The primary structure comprises 671 residues: DNA ligase (671 aa).

Residues 32-36 (DAEYD), 81-82 (SL), and Glu-113 each bind NAD(+). Lys-115 serves as the catalytic N6-AMP-lysine intermediate. NAD(+) is bound by residues Arg-136, Glu-173, Lys-290, and Lys-314. Cys-408, Cys-411, Cys-426, and Cys-432 together coordinate Zn(2+). Residues 593–671 (EIDSPFAGKT…EAEMIRLLGA (79 aa)) form the BRCT domain.

It belongs to the NAD-dependent DNA ligase family. LigA subfamily. Requires Mg(2+) as cofactor. The cofactor is Mn(2+).

The catalysed reaction is NAD(+) + (deoxyribonucleotide)n-3'-hydroxyl + 5'-phospho-(deoxyribonucleotide)m = (deoxyribonucleotide)n+m + AMP + beta-nicotinamide D-nucleotide.. Its function is as follows. DNA ligase that catalyzes the formation of phosphodiester linkages between 5'-phosphoryl and 3'-hydroxyl groups in double-stranded DNA using NAD as a coenzyme and as the energy source for the reaction. It is essential for DNA replication and repair of damaged DNA. This chain is DNA ligase, found in Salmonella gallinarum (strain 287/91 / NCTC 13346).